We begin with the raw amino-acid sequence, 309 residues long: Homoserine kinase (309 aa).

95–105 contributes to the ATP binding site; that stretch reads PQSRGLGSSAA.

Belongs to the GHMP kinase family. Homoserine kinase subfamily.

The protein localises to the cytoplasm. The enzyme catalyses L-homoserine + ATP = O-phospho-L-homoserine + ADP + H(+). Its pathway is amino-acid biosynthesis; L-threonine biosynthesis; L-threonine from L-aspartate: step 4/5. Its function is as follows. Catalyzes the ATP-dependent phosphorylation of L-homoserine to L-homoserine phosphate. This chain is Homoserine kinase, found in Corynebacterium efficiens (strain DSM 44549 / YS-314 / AJ 12310 / JCM 11189 / NBRC 100395).